Here is a 409-residue protein sequence, read N- to C-terminus: Argininosuccinate synthase (409 aa).

Residues 11–19 (AYSGGLDTS) and Ala-38 each bind ATP. L-citrulline contacts are provided by Tyr-91 and Ser-96. Gly-121 serves as a coordination point for ATP. Residues Thr-123, Asn-127, and Asp-128 each contribute to the L-aspartate site. Asn-127 provides a ligand contact to L-citrulline. Positions 131, 182, 191, 267, and 279 each coordinate L-citrulline.

This sequence belongs to the argininosuccinate synthase family. Type 1 subfamily. In terms of assembly, homotetramer.

It localises to the cytoplasm. It catalyses the reaction L-citrulline + L-aspartate + ATP = 2-(N(omega)-L-arginino)succinate + AMP + diphosphate + H(+). It participates in amino-acid biosynthesis; L-arginine biosynthesis; L-arginine from L-ornithine and carbamoyl phosphate: step 2/3. The protein is Argininosuccinate synthase of Xanthobacter autotrophicus (strain ATCC BAA-1158 / Py2).